The following is a 539-amino-acid chain: uncharacterized protein (539 aa).

Disordered regions lie at residues 179–203 (SDEL…HSHG) and 433–459 (AQAS…HRDE). Acidic residues predominate over residues 182 to 192 (LLPDTGEDSDE). Over residues 433-442 (AQASARAQAR) the composition is skewed to low complexity. Residues 443 to 455 (AARRGRSAAKARG) are compositionally biased toward basic residues.

The protein belongs to the mycobacterial PPE family.

The protein resides in the secreted. This is an uncharacterized protein from Mycobacterium tuberculosis (strain CDC 1551 / Oshkosh).